The following is a 51-amino-acid chain: rpoE leader peptide (51 aa).

A short protein whose stop codon overlaps with the start codon of downstream rpoE; a premature stop codon at position 12 results in decreased expression of ECF sigma factor RpoE, thus they are translationally coupled. This is rpoE leader peptide from Escherichia coli (strain K12).